A 189-amino-acid polypeptide reads, in one-letter code: Hypoxanthine/guanine phosphoribosyltransferase (189 aa).

The protein belongs to the purine/pyrimidine phosphoribosyltransferase family. Archaeal HPRT subfamily. In terms of assembly, homodimer.

It localises to the cytoplasm. It catalyses the reaction IMP + diphosphate = hypoxanthine + 5-phospho-alpha-D-ribose 1-diphosphate. It carries out the reaction GMP + diphosphate = guanine + 5-phospho-alpha-D-ribose 1-diphosphate. Its pathway is purine metabolism; IMP biosynthesis via salvage pathway; IMP from hypoxanthine: step 1/1. In terms of biological role, catalyzes a salvage reaction resulting in the formation of IMP that is energically less costly than de novo synthesis. This Methanothrix soehngenii (strain ATCC 5969 / DSM 3671 / JCM 10134 / NBRC 103675 / OCM 69 / GP-6) (Methanosaeta concilii) protein is Hypoxanthine/guanine phosphoribosyltransferase.